The following is a 542-amino-acid chain: MGARASRHRQSPDQSQSQSPSPHHKHHHHHQTTRAPKPKPKPQPPPPQQPRSQPPPPPRHQPQQAPQQAAAEDGVGRVLGRPMEDVRATYTFGRELGRGQFGVTYLATHKPTGRRYACKSIAARKLARPDDLDDVRREVHIMHHLTGHRNIVELRGAYEDRHSVNLVMELCEGGELFDRIIARGHYSERAAAALCREIVSVVHSCHSMGVMHRDLKPENFLFLNKREDSPLKATDFGLSVFFKPGEQFRDLVGSAYYVAPEVLKRLYGAEADIWSAGVILYILLSGVPPFWAENEDGIFDAVLQGHIDFSSEPWPSISSGAKDLVKRMLRQDPKERLTAAEILNHPWIREDGEAPDKPLDITVISRMKQFRAMNKLKKVALKVVAENLSEEEIVGLKEMFKSLDTDNSGTITLEELRAGLPKLGTKISESELRQLMEAADVDGNGSIDYVEFISATMHMNRLEKEDHIYKAFEYFDKDHSGFITVDELEEALTKYDMGDEATIKEIIAEVDTDHDGRINYQEFVAMMKNNSPEIVPNRRRMF.

The disordered stretch occupies residues 1-73 (MGARASRHRQ…QAPQQAAAED (73 aa)). A lipid anchor (N-myristoyl glycine) is attached at glycine 2. A compositionally biased stretch (low complexity) spans 12 to 21 (PDQSQSQSPS). Over residues 22-40 (PHHKHHHHHQTTRAPKPKP) the composition is skewed to basic residues. Positions 41 to 60 (KPQPPPPQQPRSQPPPPPRH) are enriched in pro residues. Low complexity predominate over residues 61–71 (QPQQAPQQAAA). The Protein kinase domain maps to 90–348 (YTFGRELGRG…AAEILNHPWI (259 aa)). ATP is bound by residues 96–104 (LGRGQFGVT) and lysine 119. The Proton acceptor role is filled by aspartate 214. Positions 354 to 384 (APDKPLDITVISRMKQFRAMNKLKKVALKVV) are autoinhibitory domain. EF-hand domains follow at residues 391–426 (EEIV…LGTK), 427–462 (ISES…MNRL), 463–497 (EKED…KYDM), and 498–533 (GDEA…NSPE). Residues aspartate 404, aspartate 406, serine 408, threonine 410, glutamate 415, aspartate 440, aspartate 442, asparagine 444, serine 446, glutamate 451, aspartate 476, aspartate 478, serine 480, glutamate 487, aspartate 511, aspartate 513, aspartate 515, arginine 517, and glutamate 522 each coordinate Ca(2+).

This sequence belongs to the protein kinase superfamily. Ser/Thr protein kinase family. CDPK subfamily.

The protein localises to the membrane. It catalyses the reaction L-seryl-[protein] + ATP = O-phospho-L-seryl-[protein] + ADP + H(+). The enzyme catalyses L-threonyl-[protein] + ATP = O-phospho-L-threonyl-[protein] + ADP + H(+). Activated by calcium. Autophosphorylation may play an important role in the regulation of the kinase activity. In terms of biological role, may play a role in signal transduction pathways that involve calcium as a second messenger. This chain is Calcium-dependent protein kinase 15, found in Oryza sativa subsp. japonica (Rice).